Reading from the N-terminus, the 156-residue chain is MSRRKSAVKRTILPDARYDSQTVSKFINSLMIQGKKSTAEGIFYGAMDIVEAKTSQPGVGVFKQALNNLKPVVEVKSRRVGGATYQVPVEVRQDRRTALAMRWLISYSRDRNEKSMKEKLAAEVLAASRGEGNAVKKKEDTHRMAEANKAFAHYRW.

Belongs to the universal ribosomal protein uS7 family. As to quaternary structure, part of the 30S ribosomal subunit. Contacts proteins S9 and S11.

Its function is as follows. One of the primary rRNA binding proteins, it binds directly to 16S rRNA where it nucleates assembly of the head domain of the 30S subunit. Is located at the subunit interface close to the decoding center, probably blocks exit of the E-site tRNA. This chain is Small ribosomal subunit protein uS7, found in Gemmatimonas aurantiaca (strain DSM 14586 / JCM 11422 / NBRC 100505 / T-27).